A 340-amino-acid polypeptide reads, in one-letter code: Protein pelota homolog (340 aa).

This sequence belongs to the eukaryotic release factor 1 family. Pelota subfamily. Monomer. The cofactor is a divalent metal cation.

Its subcellular location is the cytoplasm. In terms of biological role, may function in recognizing stalled ribosomes, interact with stem-loop structures in stalled mRNA molecules, and effect endonucleolytic cleavage of the mRNA. May play a role in the release non-functional ribosomes and degradation of damaged mRNAs. Has endoribonuclease activity. In Methanosphaerula palustris (strain ATCC BAA-1556 / DSM 19958 / E1-9c), this protein is Protein pelota homolog.